Consider the following 460-residue polypeptide: Probable argininosuccinate lyase (460 aa).

S26, N114, and T159 together coordinate 2-(N(omega)-L-arginino)succinate. H160 functions as the Proton acceptor in the catalytic mechanism. The Proton donor role is filled by S281. 2-(N(omega)-L-arginino)succinate-binding residues include N289, Y321, Q326, and K329.

Belongs to the lyase 1 family. Argininosuccinate lyase subfamily. In terms of assembly, homotetramer.

The catalysed reaction is 2-(N(omega)-L-arginino)succinate = fumarate + L-arginine. The protein operates within amino-acid biosynthesis; L-arginine biosynthesis; L-arginine from L-ornithine and carbamoyl phosphate: step 3/3. The polypeptide is Probable argininosuccinate lyase (argx) (Schizosaccharomyces pombe (strain 972 / ATCC 24843) (Fission yeast)).